The following is a 414-amino-acid chain: Acyltransferase MYCGRDRAFT_85486 (414 aa).

Positions 16 to 25 (DGTSTVTIRP) are enriched in polar residues. The tract at residues 16–47 (DGTSTVTIRPTQKAAPSEEPSQDTAPSKKDSN) is disordered. His329 provides a ligand contact to substrate. Glu367 functions as the Proton acceptor in the catalytic mechanism.

Belongs to the lysine N-acyltransferase mbtK family.

Its pathway is siderophore biosynthesis. Functionally, acyltransferase; part of the gene cluster 14 that mediates the biosynthesis of a ferrichrome A-like siderophore which may contribute to organismal virulence. The first step of siderophore biosynthesis is performed by the HMG-CoA synthase (HMGS) MYCGRDRAFT_54740 which catalyzes the generation of HMG-CoA and CoA using acetoacetyl-CoA and acetyl-CoA as substrates. The enoyl-CoA isomerase/hydratase MYCGRDRAFT_76805 then catalyzes the conversion of HMG-CoA to methylglutaconyl-CoA. The acyltransferase MYCGRDRAFT_85486 then fuses methylglutaconyl-CoA with hydroxyornithine to yield methylglutaconyl hydroxyornithine. Methylglutaconyl hydroxyornithine is then available for use by the nonribosomal peptide synthetase NRPS2 to generate the ferrichrome A-like siderophore. This is Acyltransferase MYCGRDRAFT_85486 from Zymoseptoria tritici (strain CBS 115943 / IPO323) (Speckled leaf blotch fungus).